The following is a 364-amino-acid chain: Aminomethyltransferase (364 aa).

The protein belongs to the GcvT family. In terms of assembly, the glycine cleavage system is composed of four proteins: P, T, L and H.

The enzyme catalyses N(6)-[(R)-S(8)-aminomethyldihydrolipoyl]-L-lysyl-[protein] + (6S)-5,6,7,8-tetrahydrofolate = N(6)-[(R)-dihydrolipoyl]-L-lysyl-[protein] + (6R)-5,10-methylene-5,6,7,8-tetrahydrofolate + NH4(+). The glycine cleavage system catalyzes the degradation of glycine. The sequence is that of Aminomethyltransferase from Salmonella arizonae (strain ATCC BAA-731 / CDC346-86 / RSK2980).